Consider the following 66-residue polypeptide: UPF0370 protein CKO_00315 (66 aa).

The chain crosses the membrane as a helical span at residues 4-24; the sequence is LAKYWWILVLVFLVGVLINVI. Residues 39–66 are disordered; the sequence is KPELPPHRDFNDKWDDDDDWPKKDQPKK. Positions 42-51 are enriched in basic and acidic residues; that stretch reads LPPHRDFNDK.

It belongs to the UPF0370 family.

It localises to the cell membrane. This chain is UPF0370 protein CKO_00315, found in Citrobacter koseri (strain ATCC BAA-895 / CDC 4225-83 / SGSC4696).